The primary structure comprises 172 residues: C-phycocyanin beta subunit (172 aa).

An N4-methylasparagine modification is found at N72. (2R,3E)-phycocyanobilin contacts are provided by C82 and C153.

The protein belongs to the phycobiliprotein family. Heterodimer of an alpha and a beta subunit, which further assembles into trimers and the trimers into hexamers. Contains two covalently linked bilin chromophores.

It is found in the cellular thylakoid membrane. Functionally, light-harvesting photosynthetic bile pigment-protein from the phycobiliprotein complex (phycobilisome, PBS). Phycocyanin is the major phycobiliprotein in the PBS rod. The protein is C-phycocyanin beta subunit (cpcB) of Synechocystis sp. (strain PCC 6701).